A 306-amino-acid polypeptide reads, in one-letter code: Peroxisome biogenesis factor 2 (306 aa).

The Peroxisomal matrix segment spans residues M1 to L15. Residues R16–Q42 form a helical membrane-spanning segment. Over G43–L48 the chain is Cytoplasmic. The chain crosses the membrane as a helical span at residues L49–A74. Residues T75–L98 lie on the Peroxisomal matrix side of the membrane. A helical transmembrane segment spans residues N99 to S125. Topologically, residues N126 to Q134 are cytoplasmic. The helical transmembrane segment at R135–Q161 threads the bilayer. The Peroxisomal matrix segment spans residues G162 to G188. A helical transmembrane segment spans residues F189 to I212. The Cytoplasmic segment spans residues N213 to L306. C245, C248, C260, H262, C265, C268, C281, and C284 together coordinate Zn(2+). The RING-type zinc finger occupies C245 to S285.

This sequence belongs to the pex2/pex10/pex12 family. Component of the PEX2-PEX10-PEX12 retrotranslocation channel.

The protein resides in the peroxisome membrane. The catalysed reaction is [E2 ubiquitin-conjugating enzyme]-S-ubiquitinyl-L-cysteine + [acceptor protein]-L-cysteine = [E2 ubiquitin-conjugating enzyme]-L-cysteine + [acceptor protein]-S-ubiquitinyl-L-cysteine.. It catalyses the reaction S-ubiquitinyl-[E2 ubiquitin-conjugating enzyme]-L-cysteine + [acceptor protein]-L-lysine = [E2 ubiquitin-conjugating enzyme]-L-cysteine + N(6)-ubiquitinyl-[acceptor protein]-L-lysine.. The protein operates within protein modification; protein ubiquitination. Its function is as follows. E3 ubiquitin-protein ligase component of a retrotranslocation channel required for peroxisome organization by mediating export of the PEX5 receptor from peroxisomes to the cytosol, thereby promoting PEX5 recycling. The retrotranslocation channel is composed of PEX2, PEX10 and PEX12; each subunit contributing transmembrane segments that coassemble into an open channel that specifically allows the passage of PEX5 through the peroxisomal membrane. PEX2 also regulates peroxisome organization by acting as a E3 ubiquitin-protein ligase. This Xenopus laevis (African clawed frog) protein is Peroxisome biogenesis factor 2.